Consider the following 115-residue polypeptide: Phosphoribosyl-AMP cyclohydrolase (115 aa).

Asp-80 contacts Mg(2+). Cys-81 contacts Zn(2+). Positions 82 and 84 each coordinate Mg(2+). Cys-97 and Cys-104 together coordinate Zn(2+).

The protein belongs to the PRA-CH family. In terms of assembly, homodimer. It depends on Mg(2+) as a cofactor. Requires Zn(2+) as cofactor.

It localises to the cytoplasm. It catalyses the reaction 1-(5-phospho-beta-D-ribosyl)-5'-AMP + H2O = 1-(5-phospho-beta-D-ribosyl)-5-[(5-phospho-beta-D-ribosylamino)methylideneamino]imidazole-4-carboxamide. The protein operates within amino-acid biosynthesis; L-histidine biosynthesis; L-histidine from 5-phospho-alpha-D-ribose 1-diphosphate: step 3/9. Catalyzes the hydrolysis of the adenine ring of phosphoribosyl-AMP. This chain is Phosphoribosyl-AMP cyclohydrolase, found in Mycolicibacterium paratuberculosis (strain ATCC BAA-968 / K-10) (Mycobacterium paratuberculosis).